The primary structure comprises 438 residues: (3,5-dihydroxyphenyl)acetyl-CoA 1,2-dioxygenase (438 aa).

Substrate contacts are provided by residues D183, E189, 222–225 (HPRY), 233–238 (AGINLK), G296, 325–327 (IPG), and Q416.

This sequence belongs to the enoyl-CoA hydratase/isomerase family. As to quaternary structure, homohexamer; dimer of trimers.

The enzyme catalyses (3,5-dihydroxyphenyl)acetyl-CoA + O2 = 2-(3,5-dihydroxyphenyl)-2-oxoacetate + CoA + H(+). Its activity is regulated as follows. Inhibited by DPA-S-(N-acetylcysteamine). In terms of biological role, involved in the biosynthesis of the nonproteinogenic amino acid monomer (S)-3,5-dihydroxyphenylglycine (Dpg) responsible of the production of vancomycin and teicoplanin antibiotics. Catalyzes the unusual conversion 3,5-dihydroxyphenylacetyl-CoA (DPA-CoA) to 3,5-dihydroxyphenylglyoxylate. DpgC performed a net four-electron oxidation of the benzylic carbon of DPA-CoA and the hydrolysis of the thioester bond to generate free CoA. DpgC has the ability to process a diverse range of substituted phenylacetyl-CoA substrates. The chain is (3,5-dihydroxyphenyl)acetyl-CoA 1,2-dioxygenase from Streptomyces toyocaensis.